Consider the following 362-residue polypeptide: Tyrosine recombinase XerH (362 aa).

The Core-binding (CB) domain maps to 43-140; it reads ECLNELNQAC…ALLGLFSYID (98 aa). One can recognise a Tyr recombinase domain in the interval 170–357; that stretch reads KLPTHLNNEE…DKQRLEEAAS (188 aa). Residues Arg-213, Lys-239, His-309, Arg-312, and His-335 contribute to the active site. Tyr-344 (O-(3'-phospho-DNA)-tyrosine intermediate) is an active-site residue.

The protein belongs to the 'phage' integrase family. XerH subfamily.

It is found in the cytoplasm. FtsK is required for recombination. Functionally, site-specific tyrosine recombinase, which acts by catalyzing the cutting and rejoining of the recombining DNA molecules. Involved in chromosome segregation. May contribute to chromosome decatenation. In Helicobacter pylori (strain ATCC 700392 / 26695) (Campylobacter pylori), this protein is Tyrosine recombinase XerH.